A 226-amino-acid chain; its full sequence is Ribose-5-phosphate isomerase A (226 aa).

Substrate-binding positions include threonine 25–threonine 28, aspartate 81–aspartate 84, and lysine 94–glycine 97. Residue glutamate 103 is the Proton acceptor of the active site. Position 121 (lysine 121) interacts with substrate.

It belongs to the ribose 5-phosphate isomerase family. In terms of assembly, homodimer.

The catalysed reaction is aldehydo-D-ribose 5-phosphate = D-ribulose 5-phosphate. The protein operates within carbohydrate degradation; pentose phosphate pathway; D-ribose 5-phosphate from D-ribulose 5-phosphate (non-oxidative stage): step 1/1. In terms of biological role, catalyzes the reversible conversion of ribose-5-phosphate to ribulose 5-phosphate. The polypeptide is Ribose-5-phosphate isomerase A (Enterococcus faecalis (strain ATCC 700802 / V583)).